A 251-amino-acid polypeptide reads, in one-letter code: PF03932 family protein CutC (251 aa).

This sequence belongs to the CutC family.

It localises to the cytoplasm. This is PF03932 family protein CutC from Bacteroides fragilis (strain YCH46).